The chain runs to 300 residues: Probable acetyltransferase Rv3034c (300 aa).

Positions 1-25 (MNVLSLGSSSGVVWGRVPITAPAGA) are cleaved as a signal peptide.

This sequence belongs to the transferase hexapeptide repeat family.

In terms of biological role, may be involved in the biosynthesis of 6-O-methylglucosyl-containing lipopolysaccharides (MGLP). Its function is as follows. Regulates host peroxisome homeostasis in response to intracellular redox levels to favor mycobacterial infection in macrophage. Induces the expression of host peroxisome biogenesis and proliferation factors as well as peroxisome associated enzymes. Inhibits the induction of host pexophagy mechanism by down-regulating the expression of pexophagy associated proteins and adapter molecules in infected macrophages. However, during increased oxidative stress conditions, it induces degradation of dysfunctional and damaged peroxisomes. Regulation of peroxisome biogenesis and degradation is dependent upon host p-mTORC1 mediated signaling pathway. This chain is Probable acetyltransferase Rv3034c, found in Mycobacterium tuberculosis (strain ATCC 25618 / H37Rv).